The sequence spans 274 residues: 2-dehydro-3-deoxyphosphooctonate aldolase (274 aa).

Belongs to the KdsA family.

Its subcellular location is the cytoplasm. The enzyme catalyses D-arabinose 5-phosphate + phosphoenolpyruvate + H2O = 3-deoxy-alpha-D-manno-2-octulosonate-8-phosphate + phosphate. Its pathway is carbohydrate biosynthesis; 3-deoxy-D-manno-octulosonate biosynthesis; 3-deoxy-D-manno-octulosonate from D-ribulose 5-phosphate: step 2/3. It functions in the pathway bacterial outer membrane biogenesis; lipopolysaccharide biosynthesis. The sequence is that of 2-dehydro-3-deoxyphosphooctonate aldolase from Rickettsia rickettsii (strain Iowa).